The primary structure comprises 84 residues: Small ribosomal subunit protein bS18 (84 aa).

The protein belongs to the bacterial ribosomal protein bS18 family. In terms of assembly, part of the 30S ribosomal subunit. Forms a tight heterodimer with protein bS6.

Binds as a heterodimer with protein bS6 to the central domain of the 16S rRNA, where it helps stabilize the platform of the 30S subunit. In Mycoplasma mobile (strain ATCC 43663 / 163K / NCTC 11711) (Mesomycoplasma mobile), this protein is Small ribosomal subunit protein bS18.